Consider the following 339-residue polypeptide: DNA-directed RNA polymerase subunit alpha (339 aa).

Residues 1-233 form an alpha N-terminal domain (alpha-NTD) region; sequence MVREEVAGST…DLFLPFLHAE (233 aa). The alpha C-terminal domain (alpha-CTD) stretch occupies residues 264 to 339; the sequence is KKGIPLNCIF…IDLLKNKLSF (76 aa).

The protein belongs to the RNA polymerase alpha chain family. In plastids the minimal PEP RNA polymerase catalytic core is composed of four subunits: alpha, beta, beta', and beta''. When a (nuclear-encoded) sigma factor is associated with the core the holoenzyme is formed, which can initiate transcription.

The protein resides in the plastid. The protein localises to the chloroplast. It catalyses the reaction RNA(n) + a ribonucleoside 5'-triphosphate = RNA(n+1) + diphosphate. Its function is as follows. DNA-dependent RNA polymerase catalyzes the transcription of DNA into RNA using the four ribonucleoside triphosphates as substrates. The sequence is that of DNA-directed RNA polymerase subunit alpha from Secale strictum (Mountain rye).